A 208-amino-acid chain; its full sequence is 3-demethoxyubiquinol 3-hydroxylase (208 aa).

Residues Glu-57, Glu-87, His-90, Glu-139, Glu-171, and His-174 each contribute to the Fe cation site.

It belongs to the COQ7 family. Fe cation is required as a cofactor.

The protein resides in the cell membrane. It carries out the reaction a 5-methoxy-2-methyl-3-(all-trans-polyprenyl)benzene-1,4-diol + AH2 + O2 = a 3-demethylubiquinol + A + H2O. The protein operates within cofactor biosynthesis; ubiquinone biosynthesis. Its function is as follows. Catalyzes the hydroxylation of 2-nonaprenyl-3-methyl-6-methoxy-1,4-benzoquinol during ubiquinone biosynthesis. This Nitrosomonas eutropha (strain DSM 101675 / C91 / Nm57) protein is 3-demethoxyubiquinol 3-hydroxylase.